We begin with the raw amino-acid sequence, 302 residues long: ATP synthase gamma chain (302 aa).

It belongs to the ATPase gamma chain family. In terms of assembly, F-type ATPases have 2 components, CF(1) - the catalytic core - and CF(0) - the membrane proton channel. CF(1) has five subunits: alpha(3), beta(3), gamma(1), delta(1), epsilon(1). CF(0) has three main subunits: a, b and c.

The protein resides in the cell membrane. Its function is as follows. Produces ATP from ADP in the presence of a proton gradient across the membrane. The gamma chain is believed to be important in regulating ATPase activity and the flow of protons through the CF(0) complex. In Kineococcus radiotolerans (strain ATCC BAA-149 / DSM 14245 / SRS30216), this protein is ATP synthase gamma chain.